The sequence spans 294 residues: Cytidine deaminase (294 aa).

2 CMP/dCMP-type deaminase domains span residues 48-168 and 186-294; these read DEDA…FGPK and LTGD…VLLG. 89–91 provides a ligand contact to substrate; it reads NME. H102 is a Zn(2+) binding site. Catalysis depends on E104, which acts as the Proton donor. Residues C129 and C132 each contribute to the Zn(2+) site.

It belongs to the cytidine and deoxycytidylate deaminase family. As to quaternary structure, homodimer. Zn(2+) is required as a cofactor.

It catalyses the reaction cytidine + H2O + H(+) = uridine + NH4(+). The catalysed reaction is 2'-deoxycytidine + H2O + H(+) = 2'-deoxyuridine + NH4(+). Functionally, this enzyme scavenges exogenous and endogenous cytidine and 2'-deoxycytidine for UMP synthesis. This chain is Cytidine deaminase, found in Salmonella schwarzengrund (strain CVM19633).